A 475-amino-acid chain; its full sequence is 1,3-beta-glucanosyltransferase gel2 (475 aa).

The signal sequence occupies residues 1–21 (MLPTYVRLFTAVCALATTASA). Cysteine 69 and cysteine 98 are joined by a disulfide. 4 residues coordinate (1,3-beta-D-glucosyl)n: tyrosine 87, asparagine 159, glutamate 160, and aspartate 201. Residue glutamate 160 is the Proton donor of the active site. Intrachain disulfides connect cysteine 215–cysteine 350 and cysteine 234–cysteine 265. The N-linked (GlcNAc...) asparagine glycan is linked to asparagine 236. Glutamate 262 acts as the Nucleophile in catalysis. Tyrosine 294 is a (1,3-beta-D-glucosyl)n binding site. Residues asparagine 311, asparagine 339, and asparagine 357 are each glycosylated (N-linked (GlcNAc...) asparagine). The disordered stretch occupies residues 420–451 (GESNTPGAHSSGSTSGSSSSGGSSSSSSDKES). Residues 429–446 (SSGSTSGSSSSGGSSSSS) show a composition bias toward low complexity. Serine 451 is lipidated: GPI-like-anchor amidated serine. Positions 452-475 (AAGTISVPFVGLLSAASFMAFFML) are cleaved as a propeptide — removed in mature form.

The protein belongs to the glycosyl hydrolase 72 family. In terms of processing, the GPI-like anchor contains a phosphoceramide lipid group.

The protein resides in the cell membrane. In terms of biological role, splits internally a 1,3-beta-glucan molecule and transfers the newly generated reducing end (the donor) to the non-reducing end of another 1,3-beta-glucan molecule (the acceptor) forming a 1,3-beta linkage, resulting in the elongation of 1,3-beta-glucan chains in the cell wall. Involved in cell wall morphogenesis. This chain is 1,3-beta-glucanosyltransferase gel2 (gel2), found in Aspergillus fumigatus (strain CBS 144.89 / FGSC A1163 / CEA10) (Neosartorya fumigata).